The sequence spans 388 residues: Gastricsin (388 aa).

A signal peptide spans 1–16 (MKWLLVALVCLHLLEA). A propeptide spans 17–59 (AVIKVPLRKFKSIRETLKEKGLLKEFLNTHKYDPALKYRFGDF) (activation peptide). A Peptidase A1 domain is found at 73-385 (YFGEISIGTP…DMANNRVGFA (313 aa)). Residue Asp91 is part of the active site. 2 disulfides stabilise this stretch: Cys104/Cys109 and Cys267/Cys271. Residue Asp276 is part of the active site. An intrachain disulfide couples Cys310 to Cys343.

This sequence belongs to the peptidase A1 family.

It is found in the secreted. The catalysed reaction is More restricted specificity than pepsin A, but shows preferential cleavage at Tyr-|-Xaa bonds. High activity on hemoglobin.. Hydrolyzes a variety of proteins. This is Gastricsin (PGC) from Oryctolagus cuniculus (Rabbit).